A 751-amino-acid chain; its full sequence is CCR4-NOT transcription complex subunit 3 (751 aa).

Residues 240 to 534 form a disordered region; that stretch reads ATSPPSHSHM…QFSTTPEIKA (295 aa). Over residues 257–268 the composition is skewed to low complexity; the sequence is SSSTPTSTTSSS. Basic and acidic residues predominate over residues 284–293; it reads DDKKRGRSTD. T292 is modified (phosphothreonine). Positions 294-315 are enriched in polar residues; it reads SEVSQSPAKNGSKPVHSNQHPQ. The residue at position 299 (S299) is a Phosphoserine. Positions 317–330 are enriched in pro residues; it reads PAVPPTYPSGPPPT. Residues 339 to 348 show a composition bias toward polar residues; it reads GNNGASTPAA. The segment covering 441–450 has biased composition (low complexity); sequence SSSGGSSASS. The segment covering 463–472 has biased composition (polar residues); sequence APSTSKESST. Low complexity predominate over residues 473–498; sequence AAPSGAGNVASGSGNNSGGPSLLVPL. S540 bears the Phosphoserine mark. Residues 659–751 are repressor domain; that stretch reads EFYQRLSTET…YRYLEDRDLQ (93 aa).

This sequence belongs to the CNOT2/3/5 family. In terms of assembly, component of the CCR4-NOT complex; distinct complexes seem to exist that differ in the participation of probably mutually exclusive catalytic subunits. In the complex interacts directly with CNOT2. Interacts with TIP120B and NANOS2. Interacts with EBF1. Interacts in an RNA-independent manner with BICC1 (via KH domains).

The protein resides in the nucleus. It localises to the cytoplasm. Its subcellular location is the P-body. Component of the CCR4-NOT complex which is one of the major cellular mRNA deadenylases and is linked to various cellular processes including bulk mRNA degradation, miRNA-mediated repression, translational repression during translational initiation and general transcription regulation. Additional complex functions may be a consequence of its influence on mRNA expression. May be involved in metabolic regulation; may be involved in recruitment of the CCR4-NOT complex to deadenylation target mRNAs involved in energy metabolism. Involved in mitotic progression and regulation of the spindle assembly checkpoint by regulating the stability of MAD1L1 mRNA. Can repress transcription and may link the CCR4-NOT complex to transcriptional regulation; the repressive function may involve histone deacetylases. Involved in the maintenance of embryonic stem (ES) cell identity; prevents their differentiation towards extraembryonic trophectoderm lineages. The sequence is that of CCR4-NOT transcription complex subunit 3 (Cnot3) from Mus musculus (Mouse).